A 154-amino-acid polypeptide reads, in one-letter code: Myoglobin (154 aa).

Residues 2–148 (GLSDGEWQLV…FRNDIAAKYK (147 aa)) form the Globin domain. S4 is subject to Phosphoserine. H65 contacts nitrite. H65 provides a ligand contact to O2. T68 bears the Phosphothreonine mark. H94 provides a ligand contact to heme b.

It belongs to the globin family. In terms of assembly, monomeric.

It is found in the cytoplasm. The protein resides in the sarcoplasm. It catalyses the reaction Fe(III)-heme b-[protein] + nitric oxide + H2O = Fe(II)-heme b-[protein] + nitrite + 2 H(+). The enzyme catalyses H2O2 + AH2 = A + 2 H2O. Functionally, monomeric heme protein which primary function is to store oxygen and facilitate its diffusion within muscle tissues. Reversibly binds oxygen through a pentacoordinated heme iron and enables its timely and efficient release as needed during periods of heightened demand. Depending on the oxidative conditions of tissues and cells, and in addition to its ability to bind oxygen, it also has a nitrite reductase activity whereby it regulates the production of bioactive nitric oxide. Under stress conditions, like hypoxia and anoxia, it also protects cells against reactive oxygen species thanks to its pseudoperoxidase activity. The chain is Myoglobin (MB) from Ctenodactylus gundi (Northern gundi).